Here is a 462-residue protein sequence, read N- to C-terminus: 3-isopropylmalate dehydratase large subunit (462 aa).

Residues C337, C397, and C400 each contribute to the [4Fe-4S] cluster site.

Belongs to the aconitase/IPM isomerase family. LeuC type 1 subfamily. As to quaternary structure, heterodimer of LeuC and LeuD. The cofactor is [4Fe-4S] cluster.

It carries out the reaction (2R,3S)-3-isopropylmalate = (2S)-2-isopropylmalate. It functions in the pathway amino-acid biosynthesis; L-leucine biosynthesis; L-leucine from 3-methyl-2-oxobutanoate: step 2/4. Catalyzes the isomerization between 2-isopropylmalate and 3-isopropylmalate, via the formation of 2-isopropylmaleate. The protein is 3-isopropylmalate dehydratase large subunit of Listeria welshimeri serovar 6b (strain ATCC 35897 / DSM 20650 / CCUG 15529 / CIP 8149 / NCTC 11857 / SLCC 5334 / V8).